A 302-amino-acid polypeptide reads, in one-letter code: Bifunctional protein FolD (302 aa).

NADP(+) is bound by residues 171-173 (GRS), S196, and I237.

This sequence belongs to the tetrahydrofolate dehydrogenase/cyclohydrolase family. Homodimer.

The enzyme catalyses (6R)-5,10-methylene-5,6,7,8-tetrahydrofolate + NADP(+) = (6R)-5,10-methenyltetrahydrofolate + NADPH. The catalysed reaction is (6R)-5,10-methenyltetrahydrofolate + H2O = (6R)-10-formyltetrahydrofolate + H(+). It participates in one-carbon metabolism; tetrahydrofolate interconversion. Catalyzes the oxidation of 5,10-methylenetetrahydrofolate to 5,10-methenyltetrahydrofolate and then the hydrolysis of 5,10-methenyltetrahydrofolate to 10-formyltetrahydrofolate. The polypeptide is Bifunctional protein FolD (Sphingopyxis alaskensis (strain DSM 13593 / LMG 18877 / RB2256) (Sphingomonas alaskensis)).